A 314-amino-acid polypeptide reads, in one-letter code: MAATASAGAGGIDGKPRTSPKSVKFLFGGLAGMGATVFVQPLDLVKNRMQLSGEGAKTREYKTSFHALTSILKAEGLRGIYTGLSAGLLRQATYTTTRLGIYTVLFERLTGADGTPPGFLLKAVIGMTAGATGAFVGTPAEVALIRMTADGRLPADQRRGYKNVFNALIRITREEGVLTLWRGCIPTMARAVVVNAAQLASYSQSKQFLLDSGYFSDNILCHFCASMISGLVTTAASMPVDIAKTRIQNMRMIDGKPEYKNGLDVLFKVVRYEGFFSLWKGFTPYYARLGPHTVLTFIFLEQMNKAYKRLFLSG.

Alanine 2 is modified (N-acetylalanine). Serine 6 carries the post-translational modification Phosphoserine. 3 Solcar repeats span residues 23-108 (VKFL…LFER), 117-208 (PGFL…SKQF), and 217-306 (DNIL…MNKA). Residues 24–42 (KFLFGGLAGMGATVFVQPL) traverse the membrane as a helical segment. Position 57 is an N6-succinyllysine (lysine 57). Lysine 73 is modified (N6-acetyllysine). A helical transmembrane segment spans residues 83-101 (GLSAGLLRQATYTTTRLGI). Tyrosine 102 is subject to Phosphotyrosine. Transmembrane regions (helical) follow at residues 119–140 (FLLK…GTPA), 183–202 (GCIP…LASY), and 222–240 (HFCA…SMPV). N6-acetyllysine is present on lysine 256. Residues 281–300 (GFTPYYARLGPHTVLTFIFL) form a helical membrane-spanning segment.

The protein belongs to the mitochondrial carrier (TC 2.A.29) family. In terms of assembly, interacts with SMIM26. As to expression, most highly expressed in the heart.

It localises to the mitochondrion inner membrane. It carries out the reaction (S)-malate(in) + 2-oxoglutarate(out) = (S)-malate(out) + 2-oxoglutarate(in). The enzyme catalyses malonate(in) + 2-oxoglutarate(out) = malonate(out) + 2-oxoglutarate(in). It catalyses the reaction succinate(in) + 2-oxoglutarate(out) = succinate(out) + 2-oxoglutarate(in). The catalysed reaction is maleate(in) + 2-oxoglutarate(out) = maleate(out) + 2-oxoglutarate(in). It carries out the reaction oxaloacetate(in) + 2-oxoglutarate(out) = oxaloacetate(out) + 2-oxoglutarate(in). Functionally, catalyzes the transport of 2-oxoglutarate (alpha-oxoglutarate) across the inner mitochondrial membrane in an electroneutral exchange for malate. Can also exchange 2-oxoglutarate for other dicarboxylic acids such as malonate, succinate, maleate and oxaloacetate, although with lower affinity. Contributes to several metabolic processes, including the malate-aspartate shuttle, the oxoglutarate/isocitrate shuttle, in gluconeogenesis from lactate, and in nitrogen metabolism. Maintains mitochondrial fusion and fission events, and the organization and morphology of cristae. Involved in the regulation of apoptosis. Helps protect from cytotoxic-induced apoptosis by modulating glutathione levels in mitochondria. In Homo sapiens (Human), this protein is Mitochondrial 2-oxoglutarate/malate carrier protein (SLC25A11).